A 236-amino-acid polypeptide reads, in one-letter code: Terpene cyclase andB (236 aa).

Transmembrane regions (helical) follow at residues 13–33 (TVVN…YILM), 45–65 (MSML…ILCP), 70–90 (VVRP…YAAI), 106–126 (HLPL…IALI), 135–155 (FLWS…FQLL), 166–186 (VLWL…TLMW), and 200–220 (LTAY…VVFY).

It belongs to the paxB family.

The protein resides in the membrane. The protein operates within secondary metabolite biosynthesis; terpenoid biosynthesis. Functionally, terpene cyclase; part of the gene cluster that mediates the biosynthesis of anditomin, a fungal meroterpenoid. The first step of the pathway is the synthesis of 3,5-dimethylorsellinic acid (DMOA) by the polyketide synthase andM. DMOA is then converted to the phthalide compound 5,7-dihydroxy-4,6-dimethylphthalide (DHDMP) by the cytochrome P450 monooxygenase andK, which is further prenylated by the prenyltransferase andD to yield farnesyl-DHDMP. Further epoxidation by the FAD-dependent monooxygenase andE leads to epoxyfarnesyl-DHDMP. The next step involves the terpene cyclase andB that converts epoxyfarnesyl-DHDMP into preandiloid A through opening of the epoxide ring followed by the cyclization of the farnesyl moiety. Preandiloid A is in turn oxidized at the C-3 hydroxyl group to yield preandiloid B by the dehydrogenase andC. The dioxygenase andA is solely responsible for the dehydrogenation of preandiloid B leading to the enone preandiloid C, as well as for the intriguing structural rearrangement to generate the bicyclo[2.2.2]octane core, transforming preandiloid C into andiconin. FAD-binding monooxygenase andJ then produces andilesin D which is reduced by dehydrogenase andI to yield andilesin A. Action of acetyltransferase andG followed by a spontaneous acetate elimination leads then to andilesin B, which is in turn substrate of the short chain dehydrogenase andH to yield andilesin C. Finally, the dioxygenase andF catalyzes the transformation of andilesin C to anditomin. This Emericella variicolor (Aspergillus stellatus) protein is Terpene cyclase andB.